The sequence spans 131 residues: Ribonuclease P protein component (131 aa).

It belongs to the RnpA family. In terms of assembly, consists of a catalytic RNA component (M1 or rnpB) and a protein subunit.

The enzyme catalyses Endonucleolytic cleavage of RNA, removing 5'-extranucleotides from tRNA precursor.. Its function is as follows. RNaseP catalyzes the removal of the 5'-leader sequence from pre-tRNA to produce the mature 5'-terminus. It can also cleave other RNA substrates such as 4.5S RNA. The protein component plays an auxiliary but essential role in vivo by binding to the 5'-leader sequence and broadening the substrate specificity of the ribozyme. This Stutzerimonas stutzeri (strain A1501) (Pseudomonas stutzeri) protein is Ribonuclease P protein component.